The following is a 227-amino-acid chain: PKHD-type hydroxylase BamMC406_4714 (227 aa).

Residues 78 to 178 enclose the Fe2OG dioxygenase domain; the sequence is KVFPPLFNRY…RVASFFWIQS (101 aa). Fe cation is bound by residues His-96, Asp-98, and His-159. Arg-169 provides a ligand contact to 2-oxoglutarate.

The cofactor is Fe(2+). Requires L-ascorbate as cofactor.

This is PKHD-type hydroxylase BamMC406_4714 from Burkholderia ambifaria (strain MC40-6).